A 278-amino-acid chain; its full sequence is Sulfur carrier protein FdhD (278 aa).

Cys121 (cysteine persulfide intermediate) is an active-site residue. Residue 260–265 participates in Mo-bis(molybdopterin guanine dinucleotide) binding; it reads FCKPGR.

Belongs to the FdhD family.

It is found in the cytoplasm. Required for formate dehydrogenase (FDH) activity. Acts as a sulfur carrier protein that transfers sulfur from IscS to the molybdenum cofactor prior to its insertion into FDH. The chain is Sulfur carrier protein FdhD from Salmonella schwarzengrund (strain CVM19633).